The primary structure comprises 741 residues: Pentatricopeptide repeat-containing protein At1g08070, chloroplastic (741 aa).

PPR repeat units follow at residues 98 to 132 (NLLI…GLLP), 133 to 167 (NSYT…GCDL), 168 to 202 (DLYV…DVVS), 203 to 229 (YTAL…IPVK), 230 to 264 (DVVS…NVRP), 265 to 299 (DEST…GFGS), 300 to 330 (NLKI…LPYK), 331 to 365 (DVIS…GETP), 366 to 396 (NDVT…IDKR), 403 to 433 (ASSL…ILHK), 434 to 468 (SLSS…GIQP), 469 to 499 (DDIT…MTQD), and 505 to 535 (KLEH…MEME). Residues 540–615 (IWCSLLKACK…VPGCSSIEID (76 aa)) are type E motif. The type E(+) motif stretch occupies residues 616 to 646 (SVVHEFIIGDKFHPRNREIYGMLEEMEVLLE). The interval 647–741 (KAGFVPDTSE…DGVCSCNDYW (95 aa)) is type DYW motif.

This sequence belongs to the PPR family. PCMP-H subfamily. Interacts with ORRM1. Interacts with VAR3/OZ1.

The protein resides in the plastid. It localises to the chloroplast. Involved in multiple sites RNA editing events in chloroplasts. Involved in the editing of the site 9 of ndhB (ndhB-9) and site 1 of ndhG (ndhG-1) transcripts, which are two plastid-encoded subunits of the chloroplast NAD(P)H dehydrogenase (NDH) complex. Not essential for the activity of the NDH complex of the photosynthetic electron transport chain. In Arabidopsis thaliana (Mouse-ear cress), this protein is Pentatricopeptide repeat-containing protein At1g08070, chloroplastic (PCMP-H12).